Here is a 179-residue protein sequence, read N- to C-terminus: Peptidyl-tRNA hydrolase 2, mitochondrial (179 aa).

A helical transmembrane segment spans residues 15–37 (STLGLAVGVACGMCLGWSLRVCF). Residues Lys47, Lys76, Lys81, Lys95, Lys106, Lys115, Lys171, and Lys177 each participate in a glycyl lysine isopeptide (Lys-Gly) (interchain with G-Cter in ubiquitin) cross-link.

This sequence belongs to the PTH2 family. In terms of assembly, monomer. Post-translationally, ubiquitinated by PRKN during mitophagy, leading to its degradation and enhancement of mitophagy. Deubiquitinated by USP30.

Its subcellular location is the mitochondrion outer membrane. It catalyses the reaction an N-acyl-L-alpha-aminoacyl-tRNA + H2O = an N-acyl-L-amino acid + a tRNA + H(+). Its function is as follows. Peptidyl-tRNA hydrolase which releases tRNAs from the ribosome during protein synthesis. Promotes caspase-independent apoptosis by regulating the function of two transcriptional regulators, AES and TLE1. This is Peptidyl-tRNA hydrolase 2, mitochondrial (PTRH2) from Homo sapiens (Human).